A 761-amino-acid chain; its full sequence is T-box protein 1 (761 aa).

2 disordered regions span residues 1–85 and 167–210; these read MLGR…QPLT and QTDP…CSSP. Polar residues-rich tracts occupy residues 37–61 and 167–179; these read DLQNTPARSNASTDYSTQSLSNQAG and QTDPANPSGFPQA. Composition is skewed to low complexity over residues 180–191 and 198–210; these read SPSDLSTTSSQS and SSPSVSSSTCSSP. Positions 287-456 form a DNA-binding region, T-box; it reads LWRKFHEHRT…HNPFAKGFRD (170 aa). Residues 496–510 are compositionally biased toward polar residues; it reads TTGFPCQTNPTQRSN. 3 disordered regions span residues 496–515, 545–612, and 637–687; these read TTGFPCQTNPTQRSNGQHEG, SGDA…TPAH, and VCSS…LLTT. Residues 600–612 show a composition bias toward basic and acidic residues; that stretch reads GCERSNEKHTPAH. The segment covering 637-646 has biased composition (polar residues); it reads VCSSDNSNPD. The segment covering 656-687 has biased composition (low complexity); it reads SPAGSGSPSVTSGTSLFTSGSSAAPSPPLLTT.

The protein localises to the nucleus. Probable transcriptional regulator involved in developmental processes. This is T-box protein 1 (tbr1) from Patiria pectinifera (Starfish).